Here is a 357-residue protein sequence, read N- to C-terminus: Peptide chain release factor 1 (357 aa).

An N5-methylglutamine modification is found at Q233. Residues 284 to 305 are disordered; that stretch reads RSASISADRKSQVGTGDRSERI.

Belongs to the prokaryotic/mitochondrial release factor family. Post-translationally, methylated by PrmC. Methylation increases the termination efficiency of RF1.

It localises to the cytoplasm. In terms of biological role, peptide chain release factor 1 directs the termination of translation in response to the peptide chain termination codons UAG and UAA. This chain is Peptide chain release factor 1, found in Clostridium novyi (strain NT).